A 505-amino-acid polypeptide reads, in one-letter code: Lysine--tRNA ligase (505 aa).

Mg(2+) is bound by residues E415 and E422.

The protein belongs to the class-II aminoacyl-tRNA synthetase family. As to quaternary structure, homodimer. It depends on Mg(2+) as a cofactor.

It is found in the cytoplasm. It catalyses the reaction tRNA(Lys) + L-lysine + ATP = L-lysyl-tRNA(Lys) + AMP + diphosphate. The polypeptide is Lysine--tRNA ligase (Salmonella typhi).